Reading from the N-terminus, the 333-residue chain is MDVEKLNLDNIISRLLEVRGSKPGKNVQLTESEIKGLCQKSREIFLSQPILLELEAPLKICGDVHGQYYDLLRLFEYGGFPPESNYLFLGDYVDRGKQSLETICLLLAYKIKYPENFFLLRGNHECASINRIYGFYDECKRRYNIKLWKTFTDCFNCLPVAAIIDEKIFCCHGGLSPDLQSMEQIRRIMRPTDVPDQGLLCDLLWSDPDKDVTGWGENDRGVSFTFGPEVVAKFLHKHDLDLICRAHQVVEDGYEFFAKRQLVTLFSAPNYCGEFDNAGSMMTVDETLMCSFQILKPADKKKYPYGAGGVGSNRPVTPPRNAPAAQPKKGAKK.

Mn(2+)-binding residues include Asp-63, His-65, Asp-91, and Asn-123. His-124 functions as the Proton donor in the catalytic mechanism. Mn(2+) contacts are provided by His-172 and His-247. A disordered region spans residues 306-333 (GAGGVGSNRPVTPPRNAPAAQPKKGAKK). Residues 322–333 (APAAQPKKGAKK) are compositionally biased toward low complexity.

The protein belongs to the PPP phosphatase family. PP-1 subfamily. As to quaternary structure, interacts with lab-1; the interaction is direct. Interacts with knl-1; the interaction is direct. Mn(2+) is required as a cofactor. As to expression, expressed in gonads, nervous system, intestine and muscles.

Its subcellular location is the cytoplasm. It is found in the nucleus. The catalysed reaction is O-phospho-L-seryl-[protein] + H2O = L-seryl-[protein] + phosphate. The enzyme catalyses O-phospho-L-threonyl-[protein] + H2O = L-threonyl-[protein] + phosphate. Its activity is regulated as follows. Inhibited by okadaic acid. Serine/threonine-protein phosphatase essential for chromosomal dynamics during meiosis and mitosis. During meiosis, promotes chromosomal cohesion and germline immortality via a small RNA-mediated genome silencing pathway. Antagonizes the function of air-2 kinase during meiosis I and mitosis to promote chromatid cohesion and spindle attachment. Dephosphorylates histone H3 at 'Ser-10'. Dephosphorylates histone H3 at 'Thr-3'. Also involved in the activation of chloride channel clh-3 during cell swelling and meiotic maturation. Promotes small RNA-mediated genome silencing over multiple generations. Essential for embryogenesis. This Caenorhabditis elegans protein is Serine/threonine-protein phosphatase PP1-beta.